A 220-amino-acid polypeptide reads, in one-letter code: Adenylate kinase (220 aa).

10 to 15 (GAGKGT) serves as a coordination point for ATP. The NMP stretch occupies residues 30-59 (STGDLFRANISQQTELGKLAKSYMDEGNLV). Residues threonine 31, arginine 36, 57 to 59 (NLV), 85 to 88 (GFPR), and glutamine 92 contribute to the AMP site. The LID stretch occupies residues 126 to 164 (GRRICRNDSAHVFHVSYKPPKQEGVCDVCGGELYQRDDD). Residues arginine 127 and 137 to 138 (VF) contribute to the ATP site. Residues arginine 161 and arginine 172 each contribute to the AMP site. Glycine 200 is an ATP binding site.

This sequence belongs to the adenylate kinase family. Monomer.

It localises to the cytoplasm. It catalyses the reaction AMP + ATP = 2 ADP. Its pathway is purine metabolism; AMP biosynthesis via salvage pathway; AMP from ADP: step 1/1. Functionally, catalyzes the reversible transfer of the terminal phosphate group between ATP and AMP. Plays an important role in cellular energy homeostasis and in adenine nucleotide metabolism. This Streptomyces avermitilis (strain ATCC 31267 / DSM 46492 / JCM 5070 / NBRC 14893 / NCIMB 12804 / NRRL 8165 / MA-4680) protein is Adenylate kinase.